The chain runs to 160 residues: Cell cycle regulator of non-homologous end joining (160 aa).

N-acetylmethionine is present on Met-1. A KBM motif is present at residues 1 to 21 (METLKSDNKKRVLPSWMTAPG). The segment at 78-152 (KPWEQPSLVA…EGKEEEDELK (75 aa)) is disordered. Over residues 99-109 (ESPHTSSPGSS) the composition is skewed to low complexity. Positions 150-160 (ELKYVREIFFS) match the XLM motif.

In terms of assembly, interacts (via KBM motif) with XRCC5/Ku80 and XRCC6/Ku70 heterodimer. Interacts (via XLF motif) with TRIM28/KAP1, ATM, MRE11, NBN and RAD50. Interacts with splicing factor SF3B1. Interacts with ERCC6L2; this interaction is DNA independent.

The protein localises to the cytoplasm. It is found in the nucleus. Its subcellular location is the chromosome. Functionally, cell-cycle-specific regulator of classical non-homologous end joining (NHEJ) of DNA double-strand break (DSB) repair, which can act both as an activator or inhibitor of NHEJ, depending on the cell cycle phase. Acts as a regulator of DNA repair pathway choice by specifically inhibiting classical NHEJ during the S and G2 phases, thereby promoting error-free repair by homologous recombination during cell cycle phases when sister chromatids are present. Preferentially protects single-stranded overhangs at break sites by inhibiting classical NHEJ, thereby creating a local environment that favors homologous recombination. Acts via interaction with XRCC5/Ku80 and XRCC6/Ku70. In contrast, acts as an activator of NHEJ during G1 phase of the cell cycle: promotes classical NHEJ in G1 phase cells via multivalent interactions that increase the affinity of DNA damage response proteins for DSB-associated chromatin. Also involved in immunoglobulin V(D)J recombination. May also act as an indirect regulator of proteasome. This Rattus norvegicus (Rat) protein is Cell cycle regulator of non-homologous end joining.